A 300-amino-acid chain; its full sequence is Recombination-promoting nuclease RpnC (300 aa).

This sequence belongs to the Rpn/YhgA-like nuclease family.

In terms of biological role, a low activity DNA endonuclease yielding 3'-hydroxyl ends. Upon expression enhances RecA-independent DNA recombination 2.9-fold, concomitantly reducing viability by 59% and inducing DNA damage as measured by induction of the SOS repair response. This is Recombination-promoting nuclease RpnC from Escherichia coli (strain K12).